The chain runs to 655 residues: SRSF protein kinase 1 (655 aa).

The segment at 1 to 57 (MERKVLALQARKKRTKAKKDKAQRKPETQHRGSAPHSESDLPEQEEEILGSDDDEQE) is disordered. The span at 10-22 (ARKKRTKAKKDKA) shows a compositional bias: basic residues. A compositionally biased stretch (acidic residues) spans 40–57 (DLPEQEEEILGSDDDEQE). Ser-51 carries the phosphoserine; by CK2 modification. Residues 80–653 (YHVIRKLGWG…AAECLRHPWL (574 aa)) form the Protein kinase domain. ATP contacts are provided by residues 86 to 94 (LGWGHFSTV) and Lys-109. Asp-213 (proton acceptor) is an active-site residue. 2 disordered regions span residues 238 to 341 (WQRS…QDQT) and 397 to 417 (FLSS…CTPI). Positions 265-276 (KNKKKKLKKKQK) are enriched in basic residues. Composition is skewed to basic and acidic residues over residues 277–288 (RQAELLEKRMQE) and 304–318 (NKQE…RPLK). Ser-309, Ser-311, and Ser-333 each carry phosphoserine. At Ser-555 the chain carries Phosphoserine; by CK2.

Belongs to the protein kinase superfamily. CMGC Ser/Thr protein kinase family. Monomer. Found in a multisubunit complex containing seven proteins, named toposome, which separates entangled circular chromatin DNA during chromosome segregation. Interacts with HHV-1 ICP27 protein. Interacts with DNAJC8 and AHSA1/AHA1 and this mediates formation of a complex with the Hsp70 /Hsp90 machinery. Binds to IGF2BP1, SYNCRIP, HNRNPA2B1 and HNRNPC. Interacts with SAFB/SAFB1 and SAFB2 which inhibits its activity. The cofactor is Mg(2+).

The protein resides in the cytoplasm. The protein localises to the nucleus. It is found in the nucleoplasm. Its subcellular location is the nucleus matrix. It localises to the microsome. The protein resides in the nucleus speckle. The protein localises to the chromosome. It carries out the reaction L-seryl-[protein] + ATP = O-phospho-L-seryl-[protein] + ADP + H(+). It catalyses the reaction L-threonyl-[protein] + ATP = O-phospho-L-threonyl-[protein] + ADP + H(+). Activated by phosphorylation on Ser-51 and Ser-555. In terms of biological role, serine/arginine-rich protein-specific kinase which specifically phosphorylates its substrates at serine residues located in regions rich in arginine/serine dipeptides, known as RS domains and is involved in the phosphorylation of SR splicing factors and the regulation of splicing. Plays a central role in the regulatory network for splicing, controlling the intranuclear distribution of splicing factors in interphase cells and the reorganization of nuclear speckles during mitosis. Can influence additional steps of mRNA maturation, as well as other cellular activities, such as chromatin reorganization in somatic and sperm cells and cell cycle progression. Phosphorylates SFRS2, ZRSR2, LBR and PRM1. Phosphorylates SRSF1 using a directional (C-terminal to N-terminal) and a dual-track mechanism incorporating both processive phosphorylation (in which the kinase stays attached to the substrate after each round of phosphorylation) and distributive phosphorylation steps (in which the kinase and substrate dissociate after each phosphorylation event). The RS domain of SRSF1 binds first to a docking groove in the large lobe of the kinase domain of SRPK1. This induces certain structural changes in SRPK1 and/or RRM2 domain of SRSF1, allowing RRM2 to bind the kinase and initiate phosphorylation. The cycles continue for several phosphorylation steps in a processive manner (steps 1-8) until the last few phosphorylation steps (approximately steps 9-12). During that time, a mechanical stress induces the unfolding of the beta-4 motif in RRM2, which then docks at the docking groove of SRPK1. This also signals RRM2 to begin to dissociate, which facilitates SRSF1 dissociation after phosphorylation is completed. Can mediate hepatitis B virus (HBV) core protein phosphorylation. It plays a negative role in the regulation of HBV replication through a mechanism not involving the phosphorylation of the core protein but by reducing the packaging efficiency of the pregenomic RNA (pgRNA) without affecting the formation of the viral core particles. Can induce splicing of exon 10 in MAPT/TAU. In Pongo abelii (Sumatran orangutan), this protein is SRSF protein kinase 1.